The following is an 843-amino-acid chain: Histone-lysine N-methyltransferase PRDM9 (843 aa).

A KRAB-related domain is found at 23-86 (KVKDEFKDIS…QRQAMKPQIN (64 aa)). Disordered regions lie at residues 85–104 (INDS…VSPP) and 110–170 (VKHS…KKLK). Zn(2+) contacts are provided by Cys205, Cys208, Cys216, and His219. Residues 244-358 (PGLRISPSGI…PGCELLVWYG (115 aa)) form the SET domain. Residues 256 to 258 (AGL), Tyr291, and 320 to 321 (NC) each bind S-adenosyl-L-methionine. 288–294 (NSGYSWL) is a substrate binding site. Substrate is bound at residue Tyr357. The residue at position 368 (Lys368) is an N6,N6,N6-trimethyllysine; alternate. Lys368 bears the N6-methyllysine; alternate mark. N6-methyllysine is present on residues Lys372 and Lys374. Residues 388–411 (HPCLLCSLAFSSQKFLTQHMEWNH) form a C2H2-type 1 zinc finger. Residues Cys390, Cys393, His406, and His411 each coordinate Zn(2+). Residues 418–493 (GTSARINPKP…VEELRTGQTT (76 aa)) are disordered. The span at 436–454 (QEQHVDSQNKNDKASNEVK) shows a compositional bias: basic and acidic residues. The span at 462-472 (RISTTFPSTLK) shows a compositional bias: polar residues. Basic and acidic residues predominate over residues 473–488 (EQMRSEESKRTVEELR). The C2H2-type 2; degenerate zinc finger occupies 513–531 (QCGQYFSDKSNVNEHQKTH). 11 consecutive C2H2-type zinc fingers follow at residues 537–559 (YVCR…QRTH), 565–587 (YVCR…QRTH), 593–615 (YVCR…QRTH), 621–643 (YVCR…QRTH), 649–671 (YVCR…QRTH), 677–699 (YVCR…QRTH), 705–727 (YVCR…QRTH), 733–755 (YVCR…QRTH), 761–783 (YVCR…QRTH), 789–811 (YVCR…QRTH), and 817–839 (YVCR…QRTH). The Zn(2+) site is built by Cys707, Cys710, His723, His727, Cys735, Cys738, His751, His755, Cys763, Cys766, His779, His783, Cys791, Cys794, His807, and His811. The interval 715 to 805 (TAKSNLIQHQ…RGFTQKSNLI (91 aa)) is DNA-binding.

This sequence belongs to the class V-like SAM-binding methyltransferase superfamily. Homodimer. Interacts with EHMT2 and CDYL; interaction only takes place when PRDM9 is bound to hotspot DNA. Interacts with CXXC1; this interaction does not link PRDM9-activated recombination hotspot sites with DSB machinery and is not required for the hotspot recognition pathway. Forms a complex with EWSR1, REC8, SYCP3 and SYCP1; complex formation is dependent of phosphorylated form of REC8 and requires PRDM9 bound to hotspot DNA; EWSR1 joins PRDM9 with the chromosomal axis through REC8. In terms of processing, mono-methylated; automethylated. Tri-methylated; automethylated. Mono-methylation is predominant; automethylation is lower and slower than H3 peptide methylation and is in a highest S-adenosyl-L-methionine concentration-dependent. There are two major sites for automethylation at Lys-368 and Lys-374. Lysines can be simultaneously methylated, such as Lys-368(me3)/Lys-372(me1), Lys-368(me1)/Lys-374(me1) and Lys-368(me1)/Lys-372(me1)/Lys-374(me1). Automethylation is an intramolecular (cis) process. As to expression, specifically expressed in germ cells entering meiotic prophase in female fetal gonads and in postnatal testis. Expressed in early meiotic prophase.

It is found in the nucleus. Its subcellular location is the chromosome. It carries out the reaction L-lysyl-[protein] + S-adenosyl-L-methionine = N(6)-methyl-L-lysyl-[protein] + S-adenosyl-L-homocysteine + H(+). It catalyses the reaction N(6),N(6)-dimethyl-L-lysyl-[protein] + S-adenosyl-L-methionine = N(6),N(6),N(6)-trimethyl-L-lysyl-[protein] + S-adenosyl-L-homocysteine + H(+). The catalysed reaction is L-lysyl(4)-[histone H3] + 3 S-adenosyl-L-methionine = N(6),N(6),N(6)-trimethyl-L-lysyl(4)-[histone H3] + 3 S-adenosyl-L-homocysteine + 3 H(+). The enzyme catalyses L-lysyl(36)-[histone H3] + 3 S-adenosyl-L-methionine = N(6),N(6),N(6)-trimethyl-L-lysyl(36)-[histone H3] + 3 S-adenosyl-L-homocysteine + 3 H(+). It carries out the reaction L-lysyl(9)-[histone H3] + 3 S-adenosyl-L-methionine = N(6),N(6),N(6)-trimethyl-L-lysyl(9)-[histone H3] + 3 S-adenosyl-L-homocysteine + 3 H(+). It catalyses the reaction L-lysyl(20)-[histone H4] + S-adenosyl-L-methionine = N(6)-methyl-L-lysyl(20)-[histone H4] + S-adenosyl-L-homocysteine + H(+). The catalysed reaction is N(6)-methyl-L-lysyl(20)-[histone H4] + S-adenosyl-L-methionine = N(6),N(6)-dimethyl-L-lysyl(20)-[histone H4] + S-adenosyl-L-homocysteine + H(+). Histone methyltransferase that sequentially mono-, di-, and tri-methylates both 'Lys-4' (H3K4) and 'Lys-36' (H3K36) of histone H3 to produce respectively trimethylated 'Lys-4' (H3K4me3) and trimethylated 'Lys-36' (H3K36me3) histone H3 and plays a key role in meiotic prophase by determining hotspot localization thereby promoting meiotic recombination. Can also methylate all four core histones with H3 being the best substrate and the most highly modified. Is also able, on one hand, to mono and di-methylate H4K20 and on other hand to trimethylate H3K9 with the di-methylated H3K9 as the best substrate. During meiotic prophase, binds specific DNA sequences through its zinc finger domains thereby determining hotspot localization where it promotes local H3K4me3 and H3K36me3 enrichment on the same nucleosomes through its histone methyltransferase activity. Thereby promotes double-stranded breaks (DSB) formation, at this subset of PRDM9-binding sites, that initiates meiotic recombination for the proper meiotic progression. During meiotic progression hotspot-bound PRDM9 interacts with several complexes; in early leptonema binds CDYL and EHMT2 followed by EWSR1 and CXXC1 by the end of leptonema. EWSR1 joins PRDM9 with the chromosomal axis through REC8. In this way, controls the DSB repair pathway, pairing of homologous chromosomes and sex body formation. Moreover plays a central role in the transcriptional activation of genes during early meiotic prophase thanks to H3K4me3 and H3K36me3 enrichment that represents a specific tag for epigenetic transcriptional activation. In addition performs automethylation. Acetylation and phosphorylation of histone H3 attenuate or prevent histone H3 methylation. This is Histone-lysine N-methyltransferase PRDM9 from Mus musculus (Mouse).